The following is a 109-amino-acid chain: Aquaporin-2 (109 aa).

At Ser-1 to Arg-6 the chain is on the cytoplasmic side. A helical membrane pass occupies residues Ala-7–Leu-27. Residues Asn-28–Ser-35 are Extracellular-facing. The helical transmembrane segment at Val-36–Leu-54 threads the bilayer. The Cytoplasmic portion of the chain corresponds to Gly-55 to Gly-59. The discontinuously helical intramembrane region spans Ala-60–Ala-69. Positions Asn-63–Ala-65 match the NPA 1 motif. Over Cys-70–Arg-80 the chain is Cytoplasmic. The chain crosses the membrane as a helical span at residues Ala-81–Leu-102. Residues Thr-103–Gly-109 lie on the Extracellular side of the membrane.

Belongs to the MIP/aquaporin (TC 1.A.8) family. Homotetramer. Serine phosphorylation is necessary and sufficient for expression at the apical membrane. Endocytosis is not phosphorylation-dependent. In terms of processing, N-glycosylated.

It localises to the apical cell membrane. The protein resides in the basolateral cell membrane. It is found in the cell membrane. Its subcellular location is the cytoplasmic vesicle membrane. The protein localises to the golgi apparatus. It localises to the trans-Golgi network membrane. It carries out the reaction H2O(in) = H2O(out). The enzyme catalyses glycerol(in) = glycerol(out). In terms of biological role, forms a water-specific channel that provides the plasma membranes of renal collecting duct with high permeability to water, thereby permitting water to move in the direction of an osmotic gradient. Plays an essential role in renal water homeostasis. Could also be permeable to glycerol. This is Aquaporin-2 from Procavia capensis habessinica (Abyssinian hyrax).